The chain runs to 694 residues: 4-alpha-glucanotransferase (694 aa).

The protein belongs to the disproportionating enzyme family.

The protein localises to the cytoplasm. The catalysed reaction is Transfers a segment of a (1-&gt;4)-alpha-D-glucan to a new position in an acceptor, which may be glucose or a (1-&gt;4)-alpha-D-glucan.. The chain is 4-alpha-glucanotransferase (malQ) from Escherichia coli (strain K12).